A 236-amino-acid polypeptide reads, in one-letter code: Probable 2-phosphosulfolactate phosphatase (236 aa).

This sequence belongs to the ComB family. Mg(2+) serves as cofactor.

It carries out the reaction (2R)-O-phospho-3-sulfolactate + H2O = (2R)-3-sulfolactate + phosphate. In Gloeobacter violaceus (strain ATCC 29082 / PCC 7421), this protein is Probable 2-phosphosulfolactate phosphatase.